The primary structure comprises 430 residues: Target of rapamycin complex 1 subunit toc1 (430 aa).

A phosphoserine mark is found at Ser204 and Ser399.

In terms of assembly, the target of rapamycin complex 1 (TORC1) is composed of at least mip1, pop3/wat1, tco89, toc1 and tor2.

It localises to the cytoplasm. Component of TORC1, which regulates multiple cellular processes to control cell growth in response to environmental signals. Tor2 is essential for growth. Nutrient limitation and environmental stress signals cause inactivation of TORC1. Active TORC1 positively controls cell growth and ribosome biogenesis by regulating ribosomal protein gene expression. TORC1 negatively controls G1 cell-cycle arrest, sexual development and amino acid uptake. Represses mating, meiosis and sporulation efficiency by interfering with the functions of the transcription factor ste11 and the meiosis-promoting RNA-binding protein mei2. The protein is Target of rapamycin complex 1 subunit toc1 of Schizosaccharomyces pombe (strain 972 / ATCC 24843) (Fission yeast).